The chain runs to 1058 residues: Kinesin-like protein KIN-5D (1058 aa).

Positions 1–43 (MDSIQQRRGGIVSLSPAQTPRSSDKSARESRSSESNSTNRNDK) are disordered. Positions 22 to 32 (SSDKSARESRS) are enriched in basic and acidic residues. One can recognise a Kinesin motor domain in the interval 48-390 (NVQVILRCRP…LDYAHRAKNI (343 aa)). 134–141 (GQTGTGKT) provides a ligand contact to ATP. The stretch at 438 to 517 (QEEAEKKAMA…QANATIKEKE (80 aa)) forms a coiled coil.

The protein belongs to the TRAFAC class myosin-kinesin ATPase superfamily. Kinesin family. KIN-5/BimC subfamily.

The protein resides in the cytoplasm. Its subcellular location is the cytoskeleton. It is found in the spindle. Its function is as follows. Responsible for microtubule translocation. May be important for the organization of phragmoplast-specific arrays of microtubules. Plays an essential role in stabilizing the mitotic spindle. Required during mitotic cytokinesis. In Arabidopsis thaliana (Mouse-ear cress), this protein is Kinesin-like protein KIN-5D.